Consider the following 139-residue polypeptide: Hydrogenase maturation factor HypA (139 aa).

Position 2 (His2) interacts with Ni(2+). Residues Cys73, Cys76, Cys110, and Cys113 each contribute to the Zn(2+) site.

Belongs to the HypA/HybF family.

Its function is as follows. Involved in the maturation of [NiFe] hydrogenases. Required for nickel insertion into the metal center of the hydrogenase. This Thermococcus gammatolerans (strain DSM 15229 / JCM 11827 / EJ3) protein is Hydrogenase maturation factor HypA.